We begin with the raw amino-acid sequence, 207 residues long: Interleukin-6 (207 aa).

Positions 1-20 (MNSLSTSAFSLGLLLVMATA) are cleaved as a signal peptide. Cys67 and Cys73 are oxidised to a cystine. Residue Ser76 is modified to Phosphoserine. Cysteines 96 and 106 form a disulfide.

This sequence belongs to the IL-6 superfamily. Component of a hexamer of two molecules each of IL6, IL6R and IL6ST; first binds to IL6R to associate with the signaling subunit IL6ST. Interacts with IL6R (via the N-terminal ectodomain); this interaction may be affected by IL6R-binding with SORL1, hence decreasing IL6 cis signaling. Interacts with SORL1 (via the N-terminal ectodomain); this interaction leads to IL6 internalization and lysosomal degradation. May form a trimeric complex with the soluble SORL1 ectodomain and soluble IL6R receptor; this interaction might stabilize circulating IL6, hence promoting IL6 trans signaling.

It localises to the secreted. In terms of biological role, cytokine with a wide variety of biological functions in immunity, tissue regeneration, and metabolism. Binds to IL6R, then the complex associates to the signaling subunit IL6ST/gp130 to trigger the intracellular IL6-signaling pathway. The interaction with the membrane-bound IL6R and IL6ST stimulates 'classic signaling', whereas the binding of IL6 and soluble IL6R to IL6ST stimulates 'trans-signaling'. Alternatively, 'cluster signaling' occurs when membrane-bound IL6:IL6R complexes on transmitter cells activate IL6ST receptors on neighboring receiver cells. IL6 is a potent inducer of the acute phase response. Rapid production of IL6 contributes to host defense during infection and tissue injury, but excessive IL6 synthesis is involved in disease pathology. In the innate immune response, is synthesized by myeloid cells, such as macrophages and dendritic cells, upon recognition of pathogens through toll-like receptors (TLRs) at the site of infection or tissue injury. In the adaptive immune response, is required for the differentiation of B cells into immunoglobulin-secreting cells. Plays a major role in the differentiation of CD4(+) T cell subsets. Essential factor for the development of T follicular helper (Tfh) cells that are required for the induction of germinal-center formation. Required to drive naive CD4(+) T cells to the Th17 lineage. Also required for proliferation of myeloma cells and the survival of plasmablast cells. Functionally, acts as an essential factor in bone homeostasis and on vessels directly or indirectly by induction of VEGF, resulting in increased angiogenesis activity and vascular permeability. Induces, through 'trans-signaling' and synergistically with IL1B and TNF, the production of VEGF. Involved in metabolic controls, is discharged into the bloodstream after muscle contraction increasing lipolysis and improving insulin resistance. 'Trans-signaling' in central nervous system also regulates energy and glucose homeostasis. Mediates, through GLP-1, crosstalk between insulin-sensitive tissues, intestinal L cells and pancreatic islets to adapt to changes in insulin demand. Also acts as a myokine. Plays a protective role during liver injury, being required for maintenance of tissue regeneration. Also has a pivotal role in iron metabolism by regulating HAMP/hepcidin expression upon inflammation or bacterial infection. Through activation of IL6ST-YAP-NOTCH pathway, induces inflammation-induced epithelial regeneration. This Canis lupus familiaris (Dog) protein is Interleukin-6 (IL6).